We begin with the raw amino-acid sequence, 182 residues long: Large ribosomal subunit protein uL10 (182 aa).

The protein belongs to the universal ribosomal protein uL10 family. In terms of assembly, part of the ribosomal stalk of the 50S ribosomal subunit. The N-terminus interacts with L11 and the large rRNA to form the base of the stalk. The C-terminus forms an elongated spine to which L12 dimers bind in a sequential fashion forming a multimeric L10(L12)X complex.

In terms of biological role, forms part of the ribosomal stalk, playing a central role in the interaction of the ribosome with GTP-bound translation factors. This chain is Large ribosomal subunit protein uL10, found in Chloroflexus aurantiacus (strain ATCC 29364 / DSM 637 / Y-400-fl).